The chain runs to 160 residues: Cyclic pyranopterin monophosphate synthase (160 aa).

Residues 76-78 and 114-115 each bind substrate; these read LCH and ME. The active site involves Asp129.

The protein belongs to the MoaC family. Homohexamer; trimer of dimers.

The catalysed reaction is (8S)-3',8-cyclo-7,8-dihydroguanosine 5'-triphosphate = cyclic pyranopterin phosphate + diphosphate. The protein operates within cofactor biosynthesis; molybdopterin biosynthesis. Its function is as follows. Catalyzes the conversion of (8S)-3',8-cyclo-7,8-dihydroguanosine 5'-triphosphate to cyclic pyranopterin monophosphate (cPMP). This chain is Cyclic pyranopterin monophosphate synthase, found in Mesorhizobium japonicum (strain LMG 29417 / CECT 9101 / MAFF 303099) (Mesorhizobium loti (strain MAFF 303099)).